Reading from the N-terminus, the 70-residue chain is MSRKMTGIVKTFDCKSGKGLITPSDGRKDVQVHISACRQHETEALIPGIRVEFCRINGLRGPTAANVYLS.

Positions 7-67 constitute a CSD domain; it reads GIVKTFDCKS…GLRGPTAANV (61 aa).

Its subcellular location is the cytoplasm. The protein is Cold shock-like protein CspH (cspH) of Salmonella typhi.